A 258-amino-acid chain; its full sequence is Tetraspanin-18B (258 aa).

Over 1 to 25 (MGLGEASARGTSMEGDCLSCIKYLM) the chain is Cytoplasmic. A helical membrane pass occupies residues 26–46 (FVFNFLIFLGGSFLLGVGVWV). Residues 47–61 (VVDPTGFREIVAANP) lie on the Extracellular side of the membrane. Residues 62-82 (LLFTGVYIILAMGGMLFLLGF) form a helical membrane-spanning segment. The Cytoplasmic portion of the chain corresponds to 83–94 (LGCCGAIRENKC). Residues 95-115 (LLLFFFMLILIIFLAELAAAI) form a helical membrane-spanning segment. At 116–228 (LAFIFREHLT…SAVVDYFEMY (113 aa)) the chain is on the extracellular side. N-linked (GlcNAc...) asparagine glycosylation is present at Asn-141. The chain crosses the membrane as a helical span at residues 229–249 (IYVAGALAIVVLTIELFAMVF). The Cytoplasmic segment spans residues 250-258 (AMCLFRGIQ).

Belongs to the tetraspanin (TM4SF) family.

It is found in the membrane. Its function is as follows. May regulate angiogenesis through KDR/VEGFR2 and NOTCH1 pathways. This chain is Tetraspanin-18B (tspan18b), found in Danio rerio (Zebrafish).